A 206-amino-acid polypeptide reads, in one-letter code: Small ribosomal subunit protein uS4 (206 aa).

In terms of domain architecture, S4 RNA-binding spans 94 to 156; that stretch reads RRLDNVVYRL…SRRRMYFKNL (63 aa).

It belongs to the universal ribosomal protein uS4 family. As to quaternary structure, part of the 30S ribosomal subunit. Contacts protein S5. The interaction surface between S4 and S5 is involved in control of translational fidelity.

Its function is as follows. One of the primary rRNA binding proteins, it binds directly to 16S rRNA where it nucleates assembly of the body of the 30S subunit. In terms of biological role, with S5 and S12 plays an important role in translational accuracy. The polypeptide is Small ribosomal subunit protein uS4 (Roseiflexus castenholzii (strain DSM 13941 / HLO8)).